A 323-amino-acid polypeptide reads, in one-letter code: Dof zinc finger protein DOF3.6 (323 aa).

A Dof-type zinc finger spans residues 76 to 130 (LNCPRCDSTNTKFCYFNNYSLTQPRHFCKTCRRYWTRGGSLRNVPVGGGFRRNKR). Zn(2+) is bound by residues cysteine 78, cysteine 81, cysteine 103, and cysteine 106. Disordered regions lie at residues 121–160 (VGGG…SYSN) and 304–323 (GGNS…HLSF). Residues 126–135 (RRNKRSKSRS) show a composition bias toward basic residues. Low complexity predominate over residues 136–159 (KSTVVVSTDNTTSTSSLTSRPSYS).

Interacts with OBF4. In terms of tissue distribution, predominantly expressed in roots.

Its subcellular location is the nucleus. Its function is as follows. Transcription factor that binds specifically to a 5'-AA[AG]G-3' consensus core sequence. Enhances the DNA binding of OBF transcription factors to OCS elements. In Arabidopsis thaliana (Mouse-ear cress), this protein is Dof zinc finger protein DOF3.6 (DOF3.6).